Reading from the N-terminus, the 314-residue chain is tRNA dimethylallyltransferase 2 (314 aa).

Residue glycine 8–serine 15 participates in ATP binding. A substrate-binding site is contributed by threonine 10–serine 15.

The protein belongs to the IPP transferase family. Monomer. The cofactor is Mg(2+).

The catalysed reaction is adenosine(37) in tRNA + dimethylallyl diphosphate = N(6)-dimethylallyladenosine(37) in tRNA + diphosphate. Catalyzes the transfer of a dimethylallyl group onto the adenine at position 37 in tRNAs that read codons beginning with uridine, leading to the formation of N6-(dimethylallyl)adenosine (i(6)A). The sequence is that of tRNA dimethylallyltransferase 2 from Mycobacterium ulcerans (strain Agy99).